Here is a 432-residue protein sequence, read N- to C-terminus: Cytochrome c biogenesis protein CcsB (432 aa).

Transmembrane regions (helical) follow at residues 18–38 (LRLA…GTGI), 76–96 (SGWF…CSWR), and 166–186 (VGPL…AWGA).

This sequence belongs to the Ccs1/CcsB family. In terms of assembly, may interact with CcsA.

It is found in the cellular thylakoid membrane. In terms of biological role, required during biogenesis of c-type cytochromes (cytochrome c6 and cytochrome f) at the step of heme attachment. In Synechococcus sp. (strain CC9605), this protein is Cytochrome c biogenesis protein CcsB.